The chain runs to 221 residues: PKHD-type hydroxylase P9215_13741 (221 aa).

The region spanning 80-174 (RIHGTMFTKT…RFVVVGWIES (95 aa)) is the Fe2OG dioxygenase domain. The Fe cation site is built by His98, Asp100, and His155. Arg165 is a binding site for 2-oxoglutarate.

Fe(2+) serves as cofactor. It depends on L-ascorbate as a cofactor.

This chain is PKHD-type hydroxylase P9215_13741, found in Prochlorococcus marinus (strain MIT 9215).